The sequence spans 552 residues: MDNMSITNTPTSNDACLSIVHSLMCHRQGGESETFAKRAIESLVKKLKEKKDELDSLITAITTNGAHPSKCVTIQRTLDGRLQVAGRKGFPHVIYARLWRWPDLHKNELKHVKYCQYAFDLKCDSVCVNPYHYERVVSPGIDLSGLTLQSNAPSSMMVKDEYVHDFEGQPSLSTEGHSIQTIQHPPSNRASTETYSTPALLAPSESNATSTANFPNIPVASTSQPASILGGSHSEGLLQIASGPQPGQQQNGFTGQPATYHHNSTTTWTGSRTAPYTPNLPHHQNGHLQHHPPMPPHPGHYWPVHNELAFQPPISNHPAPEYWCSIAYFEMDVQVGETFKVPSSCPIVTVDGYVDPSGGDRFCLGQLSNVHRTEAIERARLHIGKGVQLECKGEGDVWVRCLSDHAVFVQSYYLDREAGRAPGDAVHKIYPSAYIKVFDLRQCHRQMQQQAATAQAAAAAQAAAVAGNIPGPGSVGGIAPAISLSAAAGIGVDDLRRLCILRMSFVKGWGPDYPRQSIKETPCWIEIHLHRALQLLDEVLHTMPIADPQPLD.

The interval 1–322 (MDNMSITNTP…PISNHPAPEY (322 aa)) is mediates interaction with ZBTB7A. The MH1 domain occupies 18-142 (SIVHSLMCHR…YERVVSPGID (125 aa)). N6-acetyllysine is present on Lys-37. The required for interaction with TSC22D1 stretch occupies residues 44–69 (VKKLKEKKDELDSLITAITTNGAHPS). Position 71 (Cys-71) interacts with Zn(2+). Residue Lys-113 forms a Glycyl lysine isopeptide (Lys-Gly) (interchain with G-Cter in SUMO2) linkage. Zn(2+)-binding residues include Cys-115, Cys-127, and His-132. Disordered regions lie at residues 168 to 194 (GQPS…STET) and 236 to 256 (GLLQ…FTGQ). Composition is skewed to polar residues over residues 170–194 (PSLS…STET) and 245–256 (QPGQQQNGFTGQ). The tract at residues 275–320 (PYTPNLPHHQNGHLQHHPPMPPHPGHYWPVHNELAFQPPISNHPAP) is SAD. In terms of domain architecture, MH2 spans 323-552 (WCSIAYFEMD…MPIADPQPLD (230 aa)). An N6-acetyllysine mark is found at Lys-428 and Lys-507. Lys-519 participates in a covalent cross-link: Glycyl lysine isopeptide (Lys-Gly) (interchain with G-Cter in ubiquitin).

Belongs to the dwarfin/SMAD family. As to quaternary structure, monomer; in the absence of TGF-beta activation. Heterotrimer; on TGF-beta activation. Heterotrimer composed of two molecules of a C-terminally phosphorylated R-SMAD molecule, SMAD2 or SMAD3, and one molecule of SMAD4 to form the transcriptional active SMAD2/SMAD3-SMAD4 complex. Found in a ternary complex composed of SMAD4, STK11/LKB1 and STK11IP. Found in a complex with SMAD1 and YY1. Identified in a complex that contains at least ZNF451, SMAD2, SMAD3 and SMAD4. Interacts with ATF2, COPS5, DACH1, MSG1, SKI, STK11/LKB1, STK11IP and TRIM33. Associates with ZNF423 or ZNF521 in response to BMP2 leading to activate transcription of BMP target genes. Interacts with USP9X. Interacts (via the MH1 and MH2 domains) with RBPMS. Interacts with WWTR1 (via coiled-coil domain). Interacts with CITED1 and CITED2. Interacts with PDPK1 (via PH domain). Interacts with VPS39; this interaction affects heterodimer formation with SMAD3, but not with SMAD2, and leads to inhibition of SMAD3-dependent transcription activation. Interactions with VPS39 and SMAD2 may be mutually exclusive. Interacts (via MH2 domain) with ZNF451 (via N-terminal zinc-finger domains). Interacts with ZC3H3. Interacts weakly with ZNF8. Interacts with NUP93 and IPO7; translocates SMAD4 to the nucleus through the NPC upon BMP7 stimulation resulting in activation of SMAD4 signaling. Interacts with CREB3L1, the interaction takes place upon TGFB1 induction and SMAD4 acts as a CREB3L1 coactivator to induce the expression of genes involved in the assembly of collagen extracellular matrix. Interacts with DLX1. Interacts with ZBTB7A; the interaction is direct and stimulated by TGFB1. Interacts with CREBBP; the recruitment of this transcriptional coactivator is negatively regulated by ZBTB7A. Interacts with EP300; the interaction with this transcriptional coactivator is negatively regulated by ZBTB7A. Interacts with HDAC1. Interacts (via MH2 domain) with ZMIZ1 (via SP-RING-type domain); in the TGF-beta signaling pathway increases the activity of the SMAD3/SMAD4 transcriptional complex. Interacts (via N-terminus) with TSC22D1. Phosphorylated by PDPK1. Post-translationally, monoubiquitinated on Lys-519 by E3 ubiquitin-protein ligase TRIM33. Monoubiquitination hampers its ability to form a stable complex with activated SMAD2/3 resulting in inhibition of TGF-beta/BMP signaling cascade. Deubiquitination by USP9X restores its competence to mediate TGF-beta signaling.

The protein localises to the cytoplasm. The protein resides in the nucleus. Functionally, in muscle physiology, plays a central role in the balance between atrophy and hypertrophy. When recruited by MSTN, promotes atrophy response via phosphorylated SMAD2/4. MSTN decrease causes SMAD4 release and subsequent recruitment by the BMP pathway to promote hypertrophy via phosphorylated SMAD1/5/8. Acts synergistically with SMAD1 and YY1 in bone morphogenetic protein (BMP)-mediated cardiac-specific gene expression. Binds to SMAD binding elements (SBEs) (5'-GTCT/AGAC-3') within BMP response element (BMPRE) of cardiac activating regions. Common SMAD (co-SMAD) is the coactivator and mediator of signal transduction by TGF-beta (transforming growth factor). Component of the heterotrimeric SMAD2/SMAD3-SMAD4 complex that forms in the nucleus and is required for the TGF-mediated signaling. Promotes binding of the SMAD2/SMAD4/FAST-1 complex to DNA and provides an activation function required for SMAD1 or SMAD2 to stimulate transcription. Component of the multimeric SMAD3/SMAD4/JUN/FOS complex which forms at the AP1 promoter site; required for synergistic transcriptional activity in response to TGF-beta. May act as a tumor suppressor. Positively regulates PDPK1 kinase activity by stimulating its dissociation from the 14-3-3 protein YWHAQ which acts as a negative regulator. This Homo sapiens (Human) protein is Mothers against decapentaplegic homolog 4 (SMAD4).